A 316-amino-acid polypeptide reads, in one-letter code: Ribosomal protein L11 methyltransferase (316 aa).

The S-adenosyl-L-methionine site is built by Thr157, Gly178, Asp200, and Asn243.

It belongs to the methyltransferase superfamily. PrmA family.

Its subcellular location is the cytoplasm. The catalysed reaction is L-lysyl-[protein] + 3 S-adenosyl-L-methionine = N(6),N(6),N(6)-trimethyl-L-lysyl-[protein] + 3 S-adenosyl-L-homocysteine + 3 H(+). Its function is as follows. Methylates ribosomal protein L11. This Streptococcus pneumoniae (strain P1031) protein is Ribosomal protein L11 methyltransferase.